Here is a 288-residue protein sequence, read N- to C-terminus: ATP synthase gamma chain (288 aa).

This sequence belongs to the ATPase gamma chain family. As to quaternary structure, F-type ATPases have 2 components, CF(1) - the catalytic core - and CF(0) - the membrane proton channel. CF(1) has five subunits: alpha(3), beta(3), gamma(1), delta(1), epsilon(1). CF(0) has three main subunits: a, b and c.

It localises to the cell inner membrane. Its function is as follows. Produces ATP from ADP in the presence of a proton gradient across the membrane. The gamma chain is believed to be important in regulating ATPase activity and the flow of protons through the CF(0) complex. This Vibrio cholerae serotype O1 (strain ATCC 39541 / Classical Ogawa 395 / O395) protein is ATP synthase gamma chain.